The sequence spans 330 residues: MAKAPVNVTVTGAAGQIGYALLFRIASGQLLGVDTPVRLRLLEIPQAIKAAEGTAMELDDCAFPLLAGVDIYDDPRKAFDGVNVALLVGARPRTKGMERRDLLEANGGIFGPQGAAINDGAADDVRVLVVGNPANTNALIAQAHAPDIPADRFTAMTRLDHNRALSQLAAKLNVSVSDIKKLTIWGNHSATQYPDIFHAEVNGRSAVEAVNDEEWLRDTFIPTVAKRGAAIIEARGASSAASAANAAIDHVYDWVNGTPEGDWTSVALPSDGSYGVPEGLVSSFPVVSRNGSWEIVQGLEINEFSRERIDASVRELEEEREAVRALGLIK.

12 to 18 (GAAGQIG) serves as a coordination point for NAD(+). Substrate contacts are provided by Arg-93 and Arg-99. NAD(+) is bound by residues Asn-106, Gln-113, and 130 to 132 (VGN). Residues Asn-132 and Arg-163 each contribute to the substrate site. The Proton acceptor role is filled by His-188.

This sequence belongs to the LDH/MDH superfamily. MDH type 2 family.

It catalyses the reaction (S)-malate + NAD(+) = oxaloacetate + NADH + H(+). Functionally, catalyzes the reversible oxidation of malate to oxaloacetate. In Thermobifida fusca (strain YX), this protein is Malate dehydrogenase.